The sequence spans 187 residues: uncharacterized protein (187 aa).

Residues 8-28 (ITFFIILLICLICILLLLVVF) traverse the membrane as a helical segment. The interval 99 to 153 (PLENRRDMEAEEENQINEKQEPENAGETGQEEDDGLQKIHTSVTRTPSVVESQKR) is disordered. Residues 137–149 (IHTSVTRTPSVVE) show a composition bias toward polar residues.

It localises to the membrane. This is an uncharacterized protein from Homo sapiens (Human).